The following is a 207-amino-acid chain: LexA repressor (207 aa).

Positions 28–48 form a DNA-binding region, H-T-H motif; sequence VREIGEAVGLASSSTVHGHLA. Residues Ser-129 and Lys-167 each act as for autocatalytic cleavage activity in the active site.

It belongs to the peptidase S24 family. In terms of assembly, homodimer.

It catalyses the reaction Hydrolysis of Ala-|-Gly bond in repressor LexA.. Represses a number of genes involved in the response to DNA damage (SOS response), including recA and lexA. In the presence of single-stranded DNA, RecA interacts with LexA causing an autocatalytic cleavage which disrupts the DNA-binding part of LexA, leading to derepression of the SOS regulon and eventually DNA repair. This Bacillus licheniformis (strain ATCC 14580 / DSM 13 / JCM 2505 / CCUG 7422 / NBRC 12200 / NCIMB 9375 / NCTC 10341 / NRRL NRS-1264 / Gibson 46) protein is LexA repressor.